The chain runs to 616 residues: Hemagglutinin-neuraminidase (616 aa).

The Intravirion portion of the chain corresponds to 1–26; sequence MDRAVSQVALENDEREAKNTWRLVFR. A helical membrane pass occupies residues 27-47; sequence IAILLSTVVTLAISAAALAYS. The Virion surface segment spans residues 48 to 616; that stretch reads MEASTPSDLV…ELESYAASWP (569 aa). A glycan (N-linked (GlcNAc...) asparagine; by host) is linked at Asn119. Residues 124–152 are important for interaction with fusion/F protein; that stretch reads GAPIHDPDYIGGIGKELIVDDASDVTSYY. 3 disulfides stabilise this stretch: Cys172/Cys196, Cys186/Cys247, and Cys238/Cys251. Positions 234-239 are involved in neuraminidase activity; that stretch reads NRKSCS. N-linked (GlcNAc...) asparagine; by host glycans are attached at residues Asn341 and Asn433. 2 disulfides stabilise this stretch: Cys344/Cys461 and Cys455/Cys465. Residues Asn481, Asn538, and Asn600 are each glycosylated (N-linked (GlcNAc...) asparagine; by host). Cys531 and Cys542 are joined by a disulfide.

The protein belongs to the paramyxoviruses hemagglutinin-neuraminidase family. Homotetramer; composed of disulfide-linked homodimers. Interacts with F protein trimer. Interacts with host CG-1B; this interaction inhibits viral adsorption and replication rather than internalization.

It is found in the virion membrane. The protein resides in the host cell membrane. The catalysed reaction is Hydrolysis of alpha-(2-&gt;3)-, alpha-(2-&gt;6)-, alpha-(2-&gt;8)- glycosidic linkages of terminal sialic acid residues in oligosaccharides, glycoproteins, glycolipids, colominic acid and synthetic substrates.. Functionally, mediates the viral entry into the host cell together with fusion/F protein. Attaches the virus to sialic acid-containing cell receptors and thereby initiates infection. Binding of HN protein to the receptor induces a conformational change that allows the F protein to trigger virion/cell membranes fusion. In terms of biological role, neuraminidase activity ensures the efficient spread of the virus by dissociating the mature virions from the neuraminic acid containing glycoproteins. The sequence is that of Hemagglutinin-neuraminidase (HN) from Newcastle disease virus (strain Queensland/66) (NDV).